A 113-amino-acid chain; its full sequence is Large ribosomal subunit protein eL30 (113 aa).

The protein belongs to the eukaryotic ribosomal protein eL30 family.

This is Large ribosomal subunit protein eL30 (RpL30) from Spodoptera frugiperda (Fall armyworm).